A 419-amino-acid chain; its full sequence is Putative L-glutamine:3-amino-2,3-dideoxy-scyllo-inosose aminotransferase (419 aa).

At Lys-199 the chain carries N6-(pyridoxal phosphate)lysine.

This sequence belongs to the DegT/DnrJ/EryC1 family. L-glutamine:2-deoxy-scyllo-inosose/scyllo-inosose aminotransferase subfamily. Requires pyridoxal 5'-phosphate as cofactor.

It catalyses the reaction 3-amino-2,3-dideoxy-scyllo-inosose + L-glutamine = 2-deoxystreptamine + 2-oxoglutaramate. Its pathway is metabolic intermediate biosynthesis; 2-deoxystreptamine biosynthesis; 2-deoxystreptamine from D-glucose 6-phosphate: step 4/4. It participates in antibiotic biosynthesis; kanamycin biosynthesis. In terms of biological role, catalyzes the transamination of 3-amino-2,3-dideoxy-scyllo-inosose (amino-DOI) into 2-deoxystreptamine (DOS). This Streptomyces kanamyceticus protein is Putative L-glutamine:3-amino-2,3-dideoxy-scyllo-inosose aminotransferase (kanD).